We begin with the raw amino-acid sequence, 127 residues long: Aspartate 1-decarboxylase (127 aa).

Ser-25 acts as the Schiff-base intermediate with substrate; via pyruvic acid in catalysis. Ser-25 bears the Pyruvic acid (Ser) mark. Position 57 (Thr-57) interacts with substrate. Tyr-58 acts as the Proton donor in catalysis. Residue 73–75 participates in substrate binding; it reads GAA.

It belongs to the PanD family. As to quaternary structure, heterooctamer of four alpha and four beta subunits. Pyruvate is required as a cofactor. Post-translationally, is synthesized initially as an inactive proenzyme, which is activated by self-cleavage at a specific serine bond to produce a beta-subunit with a hydroxyl group at its C-terminus and an alpha-subunit with a pyruvoyl group at its N-terminus.

The protein localises to the cytoplasm. The enzyme catalyses L-aspartate + H(+) = beta-alanine + CO2. Its pathway is cofactor biosynthesis; (R)-pantothenate biosynthesis; beta-alanine from L-aspartate: step 1/1. Functionally, catalyzes the pyruvoyl-dependent decarboxylation of aspartate to produce beta-alanine. The polypeptide is Aspartate 1-decarboxylase (Clostridium botulinum (strain Okra / Type B1)).